The sequence spans 550 residues: Chaperonin GroEL (550 aa).

Residues 29–32 (TLGP), K50, 86–90 (DGTTT), G414, and D495 each bind ATP.

This sequence belongs to the chaperonin (HSP60) family. As to quaternary structure, forms a cylinder of 14 subunits composed of two heptameric rings stacked back-to-back. Interacts with the co-chaperonin GroES.

The protein localises to the cytoplasm. It catalyses the reaction ATP + H2O + a folded polypeptide = ADP + phosphate + an unfolded polypeptide.. Together with its co-chaperonin GroES, plays an essential role in assisting protein folding. The GroEL-GroES system forms a nano-cage that allows encapsulation of the non-native substrate proteins and provides a physical environment optimized to promote and accelerate protein folding. In Parvibaculum lavamentivorans (strain DS-1 / DSM 13023 / NCIMB 13966), this protein is Chaperonin GroEL.